The following is a 43-amino-acid chain: Protein PsbN (43 aa).

The chain crosses the membrane as a helical span at residues 7 to 27 (LSIAIGSILLVITGFAIYTAF).

Belongs to the PsbN family.

The protein resides in the cellular thylakoid membrane. Functionally, may play a role in photosystem I and II biogenesis. This Crocosphaera subtropica (strain ATCC 51142 / BH68) (Cyanothece sp. (strain ATCC 51142)) protein is Protein PsbN.